Consider the following 442-residue polypeptide: D-serine dehydratase 1 (442 aa).

At K118 the chain carries N6-(pyridoxal phosphate)lysine.

Belongs to the serine/threonine dehydratase family. DsdA subfamily. Monomer. Pyridoxal 5'-phosphate is required as a cofactor.

It catalyses the reaction D-serine = pyruvate + NH4(+). This Escherichia coli (strain UTI89 / UPEC) protein is D-serine dehydratase 1.